Here is a 275-residue protein sequence, read N- to C-terminus: DNA-directed RNA polymerase subunit Rpo3 (275 aa).

It belongs to the archaeal Rpo3/eukaryotic RPB3 RNA polymerase subunit family. In terms of assembly, part of the RNA polymerase complex.

The protein localises to the cytoplasm. It carries out the reaction RNA(n) + a ribonucleoside 5'-triphosphate = RNA(n+1) + diphosphate. In terms of biological role, DNA-dependent RNA polymerase (RNAP) catalyzes the transcription of DNA into RNA using the four ribonucleoside triphosphates as substrates. This Methanopyrus kandleri (strain AV19 / DSM 6324 / JCM 9639 / NBRC 100938) protein is DNA-directed RNA polymerase subunit Rpo3.